A 56-amino-acid chain; its full sequence is Large ribosomal subunit protein bL32 (56 aa).

Residues 1–29 (MAVQQNKPSRSKRGMRRSHDALTTSSVSV) form a disordered region.

Belongs to the bacterial ribosomal protein bL32 family.

This Pectobacterium atrosepticum (strain SCRI 1043 / ATCC BAA-672) (Erwinia carotovora subsp. atroseptica) protein is Large ribosomal subunit protein bL32.